Here is a 267-residue protein sequence, read N- to C-terminus: Acyl-[acyl-carrier-protein]--UDP-N-acetylglucosamine O-acyltransferase (267 aa).

It belongs to the transferase hexapeptide repeat family. LpxA subfamily. As to quaternary structure, homotrimer.

It localises to the cytoplasm. It carries out the reaction a (3R)-hydroxyacyl-[ACP] + UDP-N-acetyl-alpha-D-glucosamine = a UDP-3-O-[(3R)-3-hydroxyacyl]-N-acetyl-alpha-D-glucosamine + holo-[ACP]. Its pathway is glycolipid biosynthesis; lipid IV(A) biosynthesis; lipid IV(A) from (3R)-3-hydroxytetradecanoyl-[acyl-carrier-protein] and UDP-N-acetyl-alpha-D-glucosamine: step 1/6. Functionally, involved in the biosynthesis of lipid A, a phosphorylated glycolipid that anchors the lipopolysaccharide to the outer membrane of the cell. The polypeptide is Acyl-[acyl-carrier-protein]--UDP-N-acetylglucosamine O-acyltransferase (Hamiltonella defensa subsp. Acyrthosiphon pisum (strain 5AT)).